The chain runs to 256 residues: Ribonuclease 3 (256 aa).

The RNase III domain occupies 3-125; sequence LDALQQRLGY…IVGAVFLDAG (123 aa). A Mg(2+)-binding site is contributed by glutamate 38. Aspartate 42 is an active-site residue. Residues aspartate 111 and glutamate 114 each contribute to the Mg(2+) site. The active site involves glutamate 114. The 71-residue stretch at 152 to 222 folds into the DRBM domain; it reads DAKTLLQEYL…AKLALDEVQK (71 aa). The disordered stretch occupies residues 229–256; it reads KRSRAERTGKTRKQPVPPDPQLSLRLKE.

It belongs to the ribonuclease III family. In terms of assembly, homodimer. It depends on Mg(2+) as a cofactor.

It is found in the cytoplasm. The catalysed reaction is Endonucleolytic cleavage to 5'-phosphomonoester.. Digests double-stranded RNA. Involved in the processing of primary rRNA transcript to yield the immediate precursors to the large and small rRNAs (23S and 16S). Processes some mRNAs, and tRNAs when they are encoded in the rRNA operon. Processes pre-crRNA and tracrRNA of type II CRISPR loci if present in the organism. The protein is Ribonuclease 3 of Cupriavidus pinatubonensis (strain JMP 134 / LMG 1197) (Cupriavidus necator (strain JMP 134)).